A 1285-amino-acid polypeptide reads, in one-letter code: Tat-binding homolog 7 (1285 aa).

Disordered stretches follow at residues 1-95 (MARS…LTYR), 121-173 (MSDD…RTRR), 224-243 (GREE…EKEQ), and 258-359 (QEDE…ERGR). Composition is skewed to acidic residues over residues 226–237 (EEEEEGDEEEAE) and 258–270 (QEDE…ESSE). The span at 311-325 (NRHHRNRNTSNRRRR) shows a compositional bias: basic residues. Residue 446–453 (GPPGTGKT) coordinates ATP. A Bromo domain is found at 928-1032 (ALQRQMRMFF…NTFRDAIDDM (105 aa)). The segment at 1100 to 1196 (EKLKEKLGIS…PTIQSSSSQE (97 aa)) is disordered. Positions 1136–1149 (KLNKKKKDQKRNKK) are enriched in basic residues. A compositionally biased stretch (acidic residues) spans 1155-1175 (PDGDDTEETEEAVAENNVDAD).

Belongs to the AAA ATPase family.

Thought to form a complex that enhances transcription from repetitive DNA sequences by modulating chromatin structure. The sequence is that of Tat-binding homolog 7 from Caenorhabditis briggsae.